The following is a 135-amino-acid chain: Large ribosomal subunit protein eL32 (135 aa).

A Glycyl lysine isopeptide (Lys-Gly) (interchain with G-Cter in SUMO2) cross-link involves residue Lys-9. Position 50 is an N6-succinyllysine (Lys-50). A Phosphoserine modification is found at Ser-62.

This sequence belongs to the eukaryotic ribosomal protein eL32 family. Component of the large ribosomal subunit.

Its subcellular location is the cytoplasm. Functionally, component of the large ribosomal subunit. The ribosome is a large ribonucleoprotein complex responsible for the synthesis of proteins in the cell. The chain is Large ribosomal subunit protein eL32 (RPL32) from Macaca fascicularis (Crab-eating macaque).